Consider the following 319-residue polypeptide: ATP-dependent 6-phosphofructokinase (319 aa).

Gly11 contributes to the ATP binding site. 21-25 contacts ADP; it reads RAVVR. ATP contacts are provided by residues 72 to 73 and 102 to 105; these read RC and GDGS. A Mg(2+)-binding site is contributed by Asp103. Position 125–127 (125–127) interacts with substrate; sequence TID. Residue Asp127 is the Proton acceptor of the active site. Arg154 provides a ligand contact to ADP. Residues Arg162 and 169–171 each bind substrate; that span reads MGR. Residues 185–187, Arg211, and 213–215 each bind ADP; these read GAE and KKH. Substrate-binding positions include Glu222, Arg243, and 249-252; that span reads HVQR.

Belongs to the phosphofructokinase type A (PFKA) family. ATP-dependent PFK group I subfamily. Prokaryotic clade 'B1' sub-subfamily. Homotetramer. Mg(2+) serves as cofactor.

The protein resides in the cytoplasm. The catalysed reaction is beta-D-fructose 6-phosphate + ATP = beta-D-fructose 1,6-bisphosphate + ADP + H(+). Its pathway is carbohydrate degradation; glycolysis; D-glyceraldehyde 3-phosphate and glycerone phosphate from D-glucose: step 3/4. Allosterically activated by ADP and other diphosphonucleosides, and allosterically inhibited by phosphoenolpyruvate. Functionally, catalyzes the phosphorylation of D-fructose 6-phosphate to fructose 1,6-bisphosphate by ATP, the first committing step of glycolysis. This Anoxybacillus flavithermus (strain DSM 21510 / WK1) protein is ATP-dependent 6-phosphofructokinase.